Here is a 709-residue protein sequence, read N- to C-terminus: ATP-binding cassette sub-family F member 3 (709 aa).

Position 2 is an N-acetylalanine (Ala-2). Residue Ser-83 is modified to Phosphoserine. Over residues 129–143 (RLKAKQEKRSEKDTL) the composition is skewed to basic and acidic residues. Residues 129–171 (RLKAKQEKRSEKDTLKTSNPLVLEEASASQAGSRKESRLESSG) are disordered. 3 positions are modified to phosphoserine: Ser-155, Ser-157, and Ser-161. The segment covering 161 to 171 (SRKESRLESSG) has biased composition (basic and acidic residues). ABC transporter domains are found at residues 178 to 424 (VRIE…LNQQ) and 492 to 707 (LQLD…RREG). Residue 210-217 (GRNGLGKT) coordinates ATP. The residue at position 283 (Ser-283) is a Phosphoserine. 525-532 (GENGAGKS) is a binding site for ATP.

Belongs to the ABC transporter superfamily. ABCF family. EF3 subfamily.

Displays an antiviral effect against flaviviruses in the presence of OAS1B. The chain is ATP-binding cassette sub-family F member 3 (ABCF3) from Pongo abelii (Sumatran orangutan).